The sequence spans 721 residues: Xylosyl- and glucuronyltransferase LARGE2 (721 aa).

Residues 1 to 8 (MLPRGRPR) lie on the Cytoplasmic side of the membrane. Residues 9 to 29 (ALGAAALLLLLLLLGFLLFGG) traverse the membrane as a helical; Signal-anchor for type II membrane protein segment. Residues 30 to 721 (DLGCERREPG…LQQPQSPARG (692 aa)) lie on the Lumenal side of the membrane. Residues 59–89 (DGRLRRAAALDGDPGAGPGDHNRSDCGPQPP) form a disordered region. N-linked (GlcNAc...) asparagine glycans are attached at residues Asn-80 and Asn-107. A xylosyltransferase activity region spans residues 97–372 (LHVAIVCAGH…FLEYDGNLLR (276 aa)). Residues Asp-201 and Asp-203 each contribute to the Mn(2+) site. Asn-231 carries an N-linked (GlcNAc...) asparagine glycan. Residues 373–715 (RELFVCPSQP…LKYLPALQQP (343 aa)) are glucuronyltransferase activity. Residues Asp-521 and Asp-523 each contribute to the Mn(2+) site.

The protein in the C-terminal section; belongs to the glycosyltransferase 49 family. It in the N-terminal section; belongs to the glycosyltransferase 8 family. In terms of assembly, interacts with B4GAT1. Mn(2+) serves as cofactor. In terms of tissue distribution, widely expressed. Expressed at high level in placenta, pancreas and kidney compared to LARGE. Not expressed in brain.

The protein resides in the golgi apparatus membrane. It carries out the reaction 3-O-[beta-D-GlcA-(1-&gt;3)-beta-D-Xyl-(1-&gt;4)-Rib-ol-P-Rib-ol-P-3-beta-D-GalNAc-(1-&gt;3)-beta-D-GlcNAc-(1-&gt;4)-(O-6-P-alpha-D-Man)]-Thr-[protein] + UDP-alpha-D-xylose = 3-O-[alpha-D-Xyl-(1-&gt;3)-beta-D-GlcA-(1-&gt;4)-beta-D-Xyl-(1-&gt;4)-Rib-ol-P-Rib-ol-P-3-beta-D-GalNAc-(1-&gt;3)-beta-D-GlcNAc-(1-&gt;4)-(O-6-P-alpha-D-Man)]-Thr-[protein] + UDP + H(+). The enzyme catalyses 3-O-{(1-&gt;[3)-alpha-D-Xyl-(1-&gt;3)-beta-D-GlcA-(1-&gt;](n)-4)-beta-D-Xyl-(1-&gt;4)-Rib-ol-P-Rib-ol-P-3-beta-D-GalNAc-(1-&gt;3)-beta-D-GlcNAc-(1-&gt;4)-O-6-P-alpha-D-Man}-L-Thr-[protein] + UDP-alpha-D-glucuronate = 3-O-{beta-D-GlcA-(1-&gt;[3)-alpha-D-Xyl-(1-&gt;3)-beta-D-GlcA-(1-&gt;](n)-4)-beta-D-Xyl-(1-&gt;4)-Rib-ol-P-Rib-ol-P-3-beta-D-GalNAc-(1-&gt;3)-beta-D-GlcNAc-(1-&gt;4)-O-6-P-alpha-D-Man}-L-Thr-[protein] + UDP + H(+). The catalysed reaction is 3-O-{beta-D-GlcA-(1-&gt;[3)-alpha-D-Xyl-(1-&gt;3)-beta-D-GlcA-(1-&gt;](n)-4)-beta-D-Xyl-(1-&gt;4)-Rib-ol-P-Rib-ol-P-3-beta-D-GalNAc-(1-&gt;3)-beta-D-GlcNAc-(1-&gt;4)-O-6-P-alpha-D-Man}-L-Thr-[protein] + UDP-alpha-D-xylose = 3-O-{(1-&gt;[3)-alpha-D-Xyl-(1-&gt;3)-beta-D-GlcA-(1-&gt;](n+1)-4)-beta-D-Xyl-(1-&gt;4)-Rib-ol-P-Rib-ol-P-3-beta-D-GalNAc-(1-&gt;3)-beta-D-GlcNAc-(1-&gt;4)-O-6-P-alpha-D-Man}-L-Thr-[protein] + UDP + H(+). The protein operates within protein modification; protein glycosylation. Bifunctional glycosyltransferase with both alpha-1,3-xylosyltransferase and beta-1,3-glucuronyltransferase activities involved in the maturation of alpha-dystroglycan (DAG1) by glycosylation leading to DAG1 binding to laminin G-like domain-containing extracellular proteins with high affinity and in a phosphorylated-O-mannosyl trisaccharide dependent manner. Elongates the glucuronyl-beta-1,4-xylose-beta disaccharide primer structure by adding repeating units [-3-Xylose-alpha-1,3-GlcA-beta-1-] to produce a heteropolysaccharide. Supports the maturation of DAG1 more effectively than LARGE1. In addition, can modify both heparan sulfate (HS)- and chondroitin/dermatan sulfate (CS/DS)-proteoglycans (PGs), namely GPC4, with a glycosaminoglycan (GAG)-like polysaccharide composed of xylose and glucuronic acid to confer laminin binding. The sequence is that of Xylosyl- and glucuronyltransferase LARGE2 from Homo sapiens (Human).